Here is a 134-residue protein sequence, read N- to C-terminus: Flagellar basal-body rod protein FlgC (134 aa).

Belongs to the flagella basal body rod proteins family. The basal body constitutes a major portion of the flagellar organelle and consists of four rings (L,P,S, and M) mounted on a central rod. The rod consists of about 26 subunits of FlgG in the distal portion, and FlgB, FlgC and FlgF are thought to build up the proximal portion of the rod with about 6 subunits each.

It localises to the bacterial flagellum basal body. This is Flagellar basal-body rod protein FlgC (flgC) from Salmonella typhi.